A 205-amino-acid polypeptide reads, in one-letter code: ATP-dependent dethiobiotin synthetase BioD (205 aa).

Thr-16 lines the Mg(2+) pocket. Residue Lys-32 is part of the active site. Position 36 (Thr-36) interacts with substrate. A Mg(2+)-binding site is contributed by Glu-97. 97–100 (EGAG) is an ATP binding site.

Belongs to the dethiobiotin synthetase family. In terms of assembly, homodimer. Requires Mg(2+) as cofactor.

It localises to the cytoplasm. It carries out the reaction (7R,8S)-7,8-diammoniononanoate + CO2 + ATP = (4R,5S)-dethiobiotin + ADP + phosphate + 3 H(+). It functions in the pathway cofactor biosynthesis; biotin biosynthesis; biotin from 7,8-diaminononanoate: step 1/2. Catalyzes a mechanistically unusual reaction, the ATP-dependent insertion of CO2 between the N7 and N8 nitrogen atoms of 7,8-diaminopelargonic acid (DAPA, also called 7,8-diammoniononanoate) to form a ureido ring. This Paramagnetospirillum magneticum (strain ATCC 700264 / AMB-1) (Magnetospirillum magneticum) protein is ATP-dependent dethiobiotin synthetase BioD.